The chain runs to 295 residues: NAD kinase (295 aa).

D72 (proton acceptor) is an active-site residue. NAD(+)-binding positions include 72–73 (DG), 146–147 (ND), R157, K174, D176, 187–192 (TAYALS), and Q247.

It belongs to the NAD kinase family. It depends on a divalent metal cation as a cofactor.

It localises to the cytoplasm. It catalyses the reaction NAD(+) + ATP = ADP + NADP(+) + H(+). Involved in the regulation of the intracellular balance of NAD and NADP, and is a key enzyme in the biosynthesis of NADP. Catalyzes specifically the phosphorylation on 2'-hydroxyl of the adenosine moiety of NAD to yield NADP. This chain is NAD kinase, found in Azotobacter vinelandii (strain DJ / ATCC BAA-1303).